Here is a 186-residue protein sequence, read N- to C-terminus: Dynactin subunit 3 (186 aa).

At alanine 2 the chain carries N-acetylalanine. Residues 135–157 (QQQDQCVEITEESKALLEEYNKT) are a coiled coil.

The protein belongs to the dynactin subunit 3 family. In terms of assembly, subunit of dynactin, a multiprotein complex part of a tripartite complex with dynein and a adapter, such as BICDL1, BICD2 or HOOK3. The dynactin complex is built around ACTR1A/ACTB filament and consists of an actin-related filament composed of a shoulder domain, a pointed end and a barbed end. Its length is defined by its flexible shoulder domain. The soulder is composed of 2 DCTN1 subunits, 4 DCTN2 and 2 DCTN3. The 4 DCNT2 (via N-terminus) bind the ACTR1A filament and act as molecular rulers to determine the length. The pointed end is important for binding dynein-dynactin cargo adapters. Consists of 4 subunits: ACTR10, DCNT4, DCTN5 and DCTN6. The barbed end is composed of a CAPZA1:CAPZB heterodimers, which binds ACTR1A/ACTB filament and dynactin and stabilizes dynactin.

It is found in the cytoplasm. The protein resides in the cytoskeleton. Its subcellular location is the microtubule organizing center. The protein localises to the centrosome. It localises to the chromosome. It is found in the centromere. The protein resides in the kinetochore. Its subcellular location is the spindle. The protein localises to the cleavage furrow. It localises to the midbody. Part of the dynactin complex that activates the molecular motor dynein for ultra-processive transport along microtubules. Together with dynein may be involved in spindle assembly and cytokinesis. The polypeptide is Dynactin subunit 3 (DCTN3) (Bos taurus (Bovine)).